We begin with the raw amino-acid sequence, 69 residues long: Light-harvesting protein B-1015 beta chain (69 aa).

Residues 2 to 21 lie on the Cytoplasmic side of the membrane; the sequence is ADLKPSLTGLTEEEAKEFHG. A bacteriochlorophyll contacts are provided by histidine 20 and histidine 38. Residues 22 to 44 form a helical membrane-spanning segment; sequence IFVTSTVLYLATAVIVHYLVWTA. Topologically, residues 45-56 are periplasmic; the sequence is RPWIAPIPKGWV. The propeptide occupies 57-69; the sequence is NLEGVQSALSYLV.

This sequence belongs to the antenna complex beta subunit family. As to quaternary structure, the core complex is formed by different alpha and beta chains, binding bacteriochlorophyll molecules, and arranged most probably in tetrameric structures disposed around the reaction center. The non-pigmented gamma chains may constitute additional components.

It is found in the cell inner membrane. Functionally, antenna complexes are light-harvesting systems, which transfer the excitation energy to the reaction centers. The polypeptide is Light-harvesting protein B-1015 beta chain (pufB) (Blastochloris viridis (Rhodopseudomonas viridis)).